Reading from the N-terminus, the 42-residue chain is Photosystem I reaction center subunit IX (42 aa).

The chain crosses the membrane as a helical span at residues 7–27; the sequence is YLSVAPVLSTLWFGALAGLLI.

Belongs to the PsaJ family.

It localises to the plastid. It is found in the chloroplast thylakoid membrane. Its function is as follows. May help in the organization of the PsaE and PsaF subunits. The chain is Photosystem I reaction center subunit IX from Platanus occidentalis (Sycamore).